The primary structure comprises 165 residues: Cytochrome c-type biogenesis protein CcmE (165 aa).

Topologically, residues 1–29 (MSATAEQNARNPKGKGGFARTVSQRKRKR) are cytoplasmic. The chain crosses the membrane as a helical; Signal-anchor for type II membrane protein span at residues 30 to 50 (LFLIGGALAVLAVAVGLMLTA). Residues 51 to 165 (FNQDIRFFRT…LKKKGVWEGK (115 aa)) are Periplasmic-facing. The heme site is built by His-143 and Tyr-147.

It belongs to the CcmE/CycJ family.

Its subcellular location is the cell inner membrane. In terms of biological role, heme chaperone required for the biogenesis of c-type cytochromes. Transiently binds heme delivered by CcmC and transfers the heme to apo-cytochromes in a process facilitated by CcmF and CcmH. This chain is Cytochrome c-type biogenesis protein CcmE, found in Brucella abortus (strain S19).